The sequence spans 440 residues: 3-phosphoshikimate 1-carboxyvinyltransferase (440 aa).

3-phosphoshikimate is bound by residues K26, S27, and R31. Residue K26 participates in phosphoenolpyruvate binding. 2 residues coordinate phosphoenolpyruvate: G99 and R127. S172, Q174, D320, and K347 together coordinate 3-phosphoshikimate. Q174 contacts phosphoenolpyruvate. D320 acts as the Proton acceptor in catalysis. Phosphoenolpyruvate is bound by residues R351 and R392.

Belongs to the EPSP synthase family. In terms of assembly, monomer.

It localises to the cytoplasm. The catalysed reaction is 3-phosphoshikimate + phosphoenolpyruvate = 5-O-(1-carboxyvinyl)-3-phosphoshikimate + phosphate. It functions in the pathway metabolic intermediate biosynthesis; chorismate biosynthesis; chorismate from D-erythrose 4-phosphate and phosphoenolpyruvate: step 6/7. Functionally, catalyzes the transfer of the enolpyruvyl moiety of phosphoenolpyruvate (PEP) to the 5-hydroxyl of shikimate-3-phosphate (S3P) to produce enolpyruvyl shikimate-3-phosphate and inorganic phosphate. The protein is 3-phosphoshikimate 1-carboxyvinyltransferase of Xanthomonas axonopodis pv. citri (strain 306).